The following is a 275-amino-acid chain: MPELPEVQTIVDYLNHHVLDIFIKKTIVHLPKILKNKTPQEFEKLLINHKIVKIKRLGKYLLFFLSNNLVLSVHLRMEGKFYYQAKEEWFNLAHTHIIIEFNNGMQLRYNDTRQFGTFHIYEQQSFLDSKELKKIALDPLDNNFSAQYLYEKLKKSNKAIKTALLDQSVVSGIGNIYADEILFAAKIFPTILAKNLTLKNYEKITKEAQRILLLSIKNKGTTIHTYKFGNDETGLFQKMLLVHTHAKEPCQICGTIIQKTKVNGRGTYYCPNCQN.

Catalysis depends on P2, which acts as the Schiff-base intermediate with DNA. E3 functions as the Proton donor in the catalytic mechanism. Residue K59 is the Proton donor; for beta-elimination activity of the active site. H94 and R113 together coordinate DNA. The segment at 241 to 275 adopts an FPG-type zinc-finger fold; it reads LVHTHAKEPCQICGTIIQKTKVNGRGTYYCPNCQN. R265 (proton donor; for delta-elimination activity) is an active-site residue.

It belongs to the FPG family. As to quaternary structure, monomer. It depends on Zn(2+) as a cofactor.

The enzyme catalyses Hydrolysis of DNA containing ring-opened 7-methylguanine residues, releasing 2,6-diamino-4-hydroxy-5-(N-methyl)formamidopyrimidine.. It carries out the reaction 2'-deoxyribonucleotide-(2'-deoxyribose 5'-phosphate)-2'-deoxyribonucleotide-DNA = a 3'-end 2'-deoxyribonucleotide-(2,3-dehydro-2,3-deoxyribose 5'-phosphate)-DNA + a 5'-end 5'-phospho-2'-deoxyribonucleoside-DNA + H(+). Functionally, involved in base excision repair of DNA damaged by oxidation or by mutagenic agents. Acts as a DNA glycosylase that recognizes and removes damaged bases. Has a preference for oxidized purines, such as 7,8-dihydro-8-oxoguanine (8-oxoG). Has AP (apurinic/apyrimidinic) lyase activity and introduces nicks in the DNA strand. Cleaves the DNA backbone by beta-delta elimination to generate a single-strand break at the site of the removed base with both 3'- and 5'-phosphates. The polypeptide is Formamidopyrimidine-DNA glycosylase (Ureaplasma parvum serovar 3 (strain ATCC 700970)).